Here is a 395-residue protein sequence, read N- to C-terminus: Phosphoglycerate kinase (395 aa).

Substrate is bound by residues 21–23 (DLN), arginine 36, 59–62 (HLGR), arginine 113, and arginine 146. Residues lysine 197, glutamate 324, and 350–353 (GGDT) contribute to the ATP site.

This sequence belongs to the phosphoglycerate kinase family. Monomer.

The protein localises to the cytoplasm. The catalysed reaction is (2R)-3-phosphoglycerate + ATP = (2R)-3-phospho-glyceroyl phosphate + ADP. The protein operates within carbohydrate degradation; glycolysis; pyruvate from D-glyceraldehyde 3-phosphate: step 2/5. This is Phosphoglycerate kinase from Acinetobacter baylyi (strain ATCC 33305 / BD413 / ADP1).